A 463-amino-acid chain; its full sequence is Chromosomal replication initiator protein DnaA (463 aa).

Residues 1 to 83 (MSTNQIILTD…LQLFQHYNNT (83 aa)) form a domain I, interacts with DnaA modulators region. Residues 83 to 124 (TIKSIEIITKELPGTTQTVTELPTKTFADIGSSELNSENIFS) form a domain II region. The interval 125 to 343 (TLDVRFTFDN…GALNKVIAHS (219 aa)) is domain III, AAA+ region. Residues Gly-171, Gly-173, Lys-174, and Thr-175 each coordinate ATP. A domain IV, binds dsDNA region spans residues 344–463 (NFTLKEITLE…IHLLMKILQN (120 aa)).

The protein belongs to the DnaA family. As to quaternary structure, oligomerizes as a right-handed, spiral filament on DNA at oriC.

Its subcellular location is the cytoplasm. In terms of biological role, plays an essential role in the initiation and regulation of chromosomal replication. ATP-DnaA binds to the origin of replication (oriC) to initiate formation of the DNA replication initiation complex once per cell cycle. Binds the DnaA box (a 9 base pair repeat at the origin) and separates the double-stranded (ds)DNA. Forms a right-handed helical filament on oriC DNA; dsDNA binds to the exterior of the filament while single-stranded (ss)DNA is stabiized in the filament's interior. The ATP-DnaA-oriC complex binds and stabilizes one strand of the AT-rich DNA unwinding element (DUE), permitting loading of DNA polymerase. After initiation quickly degrades to an ADP-DnaA complex that is not apt for DNA replication. Binds acidic phospholipids. The sequence is that of Chromosomal replication initiator protein DnaA from Rickettsia africae (strain ESF-5).